Reading from the N-terminus, the 281-residue chain is MLRVAVPNKGTLAEKAAQMLREAGYRQRTDPKDLVCRDDANNIEFFYLRPKDIATYVGSGDLDVGITGRDLLVDSGAPATEVVDLGFGQATFRFAARPEDIDTAQDLDGRRVATAYPGLVERHLAELGVKADVIRLDGAVENAIRLGLADVVADVVETGATLRQAGLVVFGEPLLRSSAVLVCRSAAQPHPQGELLLRRLHSVLVARRYVMLTYDVPADLLARASSLTPGIESPTVSRLHREGWVAVQAMVLRDDVHRIMDELYQVGARAILVTNIQACRL.

The protein belongs to the ATP phosphoribosyltransferase family. Long subfamily. The cofactor is Mg(2+).

The protein localises to the cytoplasm. The enzyme catalyses 1-(5-phospho-beta-D-ribosyl)-ATP + diphosphate = 5-phospho-alpha-D-ribose 1-diphosphate + ATP. It participates in amino-acid biosynthesis; L-histidine biosynthesis; L-histidine from 5-phospho-alpha-D-ribose 1-diphosphate: step 1/9. Feedback inhibited by histidine. Functionally, catalyzes the condensation of ATP and 5-phosphoribose 1-diphosphate to form N'-(5'-phosphoribosyl)-ATP (PR-ATP). Has a crucial role in the pathway because the rate of histidine biosynthesis seems to be controlled primarily by regulation of HisG enzymatic activity. This Salinispora tropica (strain ATCC BAA-916 / DSM 44818 / JCM 13857 / NBRC 105044 / CNB-440) protein is ATP phosphoribosyltransferase.